The sequence spans 859 residues: Protein argonaute-2 (859 aa).

The disordered stretch occupies residues 1-27 (MYSGAGPALAPPAPPPPIQGYAFKPPP). The residue at position 2 (Y2) is a 3'-nitrotyrosine. The segment covering 9–27 (LAPPAPPPPIQGYAFKPPP) has biased composition (pro residues). One can recognise a PAZ domain in the interval 229–348 (PVIEFVCEVL…LPLEVCNIVA (120 aa)). Residues 311–316 (YFKDRH) form an interaction with guide RNA region. S387 is subject to Phosphoserine. In terms of domain architecture, Piwi spans 517–818 (LVVVILPGKT…VAFRARYHLV (302 aa)). The interaction with guide RNA stretch occupies residues 524-566 (GKTPVYAEVKRVGDTVLGMATQCVQMKNVQRTTPQTLSNLCLK). The segment at 587–590 (FQQP) is interaction with GW182 family members. D597 is an a divalent metal cation binding site. The segment at 650–660 (LIQFYKSTRFK) is interaction with GW182 family members. Position 669 (D669) interacts with a divalent metal cation. A 4-hydroxyproline modification is found at P700. Interaction with guide RNA regions lie at residues 709–710 (KR), 753–761 (HAGIQGTSR), and 790–812 (YVRCTRSVSIPAPAYYAHLVAFR). H807 contacts a divalent metal cation. 4 positions are modified to phosphoserine: S824, S828, S831, and S834.

It belongs to the argonaute family. Ago subfamily. As to quaternary structure, interacts with DICER1 through its Piwi domain and with TARBP2 during assembly of the RNA-induced silencing complex (RISC). Together, DICER1, AGO2 and TARBP2 constitute the trimeric RISC loading complex (RLC), or micro-RNA (miRNA) loading complex (miRLC). Within the RLC/miRLC, DICER1 and TARBP2 are required to process precursor miRNAs (pre-miRNAs) to mature miRNAs and then load them onto AGO2. AGO2 bound to the mature miRNA constitutes the minimal RISC and may subsequently dissociate from DICER1 and TARBP2. Note however that the term RISC has also been used to describe the trimeric RLC/miRLC. The formation of RISC complexes containing siRNAs rather than miRNAs appears to occur independently of DICER1. Interacts with AGO1. Also interacts with DDB1, DDX5, DDX6, DDX20, DHX30, DHX36, DDX47, DHX9, ELAVL, FXR1, GEMIN4, HNRNPF, IGF2BP1, ILF3, IMP8, MATR3, PABPC1, PRMT5, P4HA1, P4HB, RBM4, SART3, TNRC6A, TNRC6B, UPF1 and YBX1. Interacts with the P-body components DCP1A and XRN1. Associates with polysomes and messenger ribonucleoproteins (mNRPs). Interacts with RBM4; the interaction is modulated under stress-induced conditions, occurs under both cell proliferation and differentiation conditions and in an RNA- and phosphorylation-independent manner. Interacts with LIMD1, WTIP and AJUBA. Interacts with TRIM71; the interaction increases in presence of RNA. Interacts with APOBEC3G in an RNA-dependent manner. Interacts with APOBEC3A, APOBEC3C, APOBEC3F and APOBEC3H. Interacts with DICER1, TARBP2, EIF6, MOV10 and RPL7A (60S ribosome subunit); they form a large RNA-induced silencing complex (RISC). Interacts with FMR1. Interacts with ZFP36. Found in a complex, composed of AGO2, CHD7 and ARB2A. Interacts with RC3H1; the interaction is RNA independent. Interacts with SND1. Interacts with SYT11. Interacts with CLNK. Interacts with GARRE1. Interacts with GRB2; this interaction is important for the formation of a ternary complex containing GRB2, AGO2 and DICER1. In terms of assembly, (Microbial infection) Interacts with Epstein-Barr virus (EBV) tegument protein BGLF2; this interaction participates in the regulation of cellular miRNA by the virus, leading to enhanced SUMOylation. (Microbial infection) Interacts with rotavirus A non-structural protein 5; this interaction probably plays a role in the sequestration of AGO2 in viral factories. As to quaternary structure, (Microbial infection) Interacts with human herpesvirus 8 protein MTA/ORF57; this interaction inhibits P-body formation. It depends on Mg(2+) as a cofactor. Mn(2+) serves as cofactor. Post-translationally, hydroxylated. 4-hydroxylation appears to enhance protein stability but is not required for miRNA-binding or endonuclease activity. In terms of processing, ubiquitinated on surface-exposed lysines by a SCF-like E3 ubiquitin-protein ligase complex containing ZSWIM8 during target-directed microRNA degradation (TDMD), a process that mediates degradation of microRNAs (miRNAs). Ubiquitination by the SCF-like E3 ubiquitin-protein ligase complex containing ZSWIM8 leads to its subsequent degradation, thereby exposing miRNAs for degradation. ZSWIM8 recognizes and binds AGO2 when it is engaged with a TDMD target. Phosphorylated. A phosphorylation cycle of C-terminal serine cluster (Ser-824-Ser-834) regulates the release of target mRNAs. Target-binding leads to phosphorylation of these residues by CSNK1A1, which reduces the affinity of AGO2 for mRNA and enables target release. The ANKRD52-PPP6C phosphatase complex dephosphorylates the residues, which primes AGO2 for binding a new target. Post-translationally, phosphorylation at Ser-387 by AKT3; leads to up-regulate translational repression of microRNA target and down-regulate endonucleolytic cleavage.

It is found in the cytoplasm. It localises to the P-body. The protein localises to the nucleus. It catalyses the reaction Endonucleolytic cleavage to 5'-phosphomonoester.. Inhibited by EDTA. Required for RNA-mediated gene silencing (RNAi) by the RNA-induced silencing complex (RISC). The 'minimal RISC' appears to include AGO2 bound to a short guide RNA such as a microRNA (miRNA) or short interfering RNA (siRNA). These guide RNAs direct RISC to complementary mRNAs that are targets for RISC-mediated gene silencing. The precise mechanism of gene silencing depends on the degree of complementarity between the miRNA or siRNA and its target. Binding of RISC to a perfectly complementary mRNA generally results in silencing due to endonucleolytic cleavage of the mRNA specifically by AGO2. Binding of RISC to a partially complementary mRNA results in silencing through inhibition of translation, and this is independent of endonuclease activity. May inhibit translation initiation by binding to the 7-methylguanosine cap, thereby preventing the recruitment of the translation initiation factor eIF4-E. May also inhibit translation initiation via interaction with EIF6, which itself binds to the 60S ribosomal subunit and prevents its association with the 40S ribosomal subunit. The inhibition of translational initiation leads to the accumulation of the affected mRNA in cytoplasmic processing bodies (P-bodies), where mRNA degradation may subsequently occur. In some cases RISC-mediated translational repression is also observed for miRNAs that perfectly match the 3' untranslated region (3'-UTR). Can also up-regulate the translation of specific mRNAs under certain growth conditions. Binds to the AU element of the 3'-UTR of the TNF (TNF-alpha) mRNA and up-regulates translation under conditions of serum starvation. Also required for transcriptional gene silencing (TGS), in which short RNAs known as antigene RNAs or agRNAs direct the transcriptional repression of complementary promoter regions. Its function is as follows. (Microbial infection) Upon Sars-CoV-2 infection, associates with viral miRNA-like small RNA, CoV2-miR-O7a, and may repress mRNAs, such as BATF2, to evade the IFN response. In Homo sapiens (Human), this protein is Protein argonaute-2.